The sequence spans 1373 residues: Poly(A) RNA polymerase gld-2 homolog B (1373 aa).

Low complexity predominate over residues 75 to 91; it reads NSCHSSNSSSNTSNNNN. 6 disordered regions span residues 75–155, 175–340, 425–543, 734–770, 802–866, and 880–928; these read NSCH…QEKQ, SDCK…FWKT, PDST…QQQK, PQQQQQQQLSSHPIPTGTSSHPPPPPPPHMFFHFADG, CGSG…ALGS, and HPLH…PTPV. Residues 96 to 112 are compositionally biased toward polar residues; it reads GQQQQPLHYCNSNNSHS. Composition is skewed to low complexity over residues 130-152, 180-219, 228-251, and 274-284; these read QQQQQPSSFFQRQQQQHQMQMQQ, SDSNNNSTSSSNNNSTISSNNNNTSSASNNNTGSSSSCSN, NENSSSSSSSNNNNISCRNNNTSS, and ESGSSEGAAES. Polar residues-rich tracts occupy residues 295–340 and 430–442; these read CNSN…FWKT and KSSSNTGGSNMIR. Positions 443–485 are enriched in low complexity; sequence SSSNGNSNFSRHQYGHQSTGSGYQQQQQRYRNAQNVYQQYQHQ. Over residues 486–502 the composition is skewed to basic residues; that stretch reads QQHHAQQHTHPHFRRKH. 2 stretches are compositionally biased toward low complexity: residues 735 to 753 and 819 to 844; these read QQQQQQQLSSHPIPTGTSS and AGALRPASPALSSSSLGSESQWSGTS. Residues 855–866 are compositionally biased toward polar residues; that stretch reads PSISPTPSALGS. Residues 880 to 890 show a composition bias toward low complexity; it reads HPLHQQHPPSH. The sufficent for interaction with Dcr-2 stretch occupies residues 945–1373; the sequence is RYLAQARNIE…FAETTAAHVA (429 aa). Residues Asp1029 and Asp1031 each coordinate Mg(2+). A PAP-associated domain is found at 1211-1272; that stretch reads TLGEHLLGFF…NIEEPFDLSN (62 aa). Low complexity predominate over residues 1320–1341; it reads LQQHQQQFEQQLHHPISGQQRS. The interval 1320–1359 is disordered; it reads LQQHQQQFEQQLHHPISGQQRSAGGGGDGANPVPSTLNPD.

This sequence belongs to the DNA polymerase type-B-like family. GLD2 subfamily. As to quaternary structure, interacts with orb, an RNA-binding protein, generating an ovarian cytoplasmic polyadenylation complex. Interacts (via C-terminus) with Dcr-2. Requires Mg(2+) as cofactor. Mn(2+) serves as cofactor. As to expression, expressed in ovaries. Not expressed in adult males.

It localises to the cytoplasm. It carries out the reaction RNA(n) + ATP = RNA(n)-3'-adenine ribonucleotide + diphosphate. Functionally, cytoplasmic poly(A) RNA polymerase that adds successive AMP monomers to the 3'-end of specific maternal RNAs (bcd, Tl, and tor), forming a poly(A) tail, during late oogenesis and early embryogenesis. In contrast to the canonical nuclear poly(A) RNA polymerase, it only adds poly(A) to selected cytoplasmic mRNAs. Required for localization of mRNAs to both poles of the egg, to recruit or maintain known centrosomal proteins with two types of microtubule organizing centers (MTOCs): the central MTOC that forms between the meiosis II tandem spindles and the centrosomes of the mitotic spindle. Required at the final stage of oogenesis for meiosis I metaphase arrest and for progression beyond this stage. Functions with the RNA-binding protein Dcr-2 to promote cytoplasmic polyadenylation and translational activation of certain mRNAs such as Tl and r2d2. As a consequence, is involved in regulating Toll immune signaling and promoting resistance to fungal infection. This is Poly(A) RNA polymerase gld-2 homolog B (wisp) from Drosophila melanogaster (Fruit fly).